We begin with the raw amino-acid sequence, 44 residues long: Opistoporin-2 (44 aa).

In terms of tissue distribution, expressed by the venom gland.

It is found in the secreted. Its subcellular location is the target cell membrane. Its function is as follows. At high concentrations, acts as a pore former in cellular membranes and causes the leakage of the cells. At submicromolar concentrations, degranulates granulocytes and has a weak hemolytic activity against human erythrocytes. Also strongly inhibits the production of superoxide anions. Has a strong antibacterial activity against Gram-negative bacteria but is less active against Gram-positive bacteria. Also has antifungal activity. This is Opistoporin-2 from Opistophthalmus carinatus (African yellow leg scorpion).